The sequence spans 101 residues: Apolipoprotein C-II (101 aa).

An N-terminal signal peptide occupies residues 1-22 (MGTRFLLALCLVLLVLGFEVQG). The tract at residues 66–74 (AVDEKLRDL) is lipid binding. The segment at 78-101 (STAAMSTYTGIFTDQVLSVLKGEE) is lipoprotein lipase cofactor.

This sequence belongs to the apolipoprotein C2 family. In terms of processing, proapolipoprotein C-II is synthesized as a sialic acid containing glycoprotein which is subsequently desialylated prior to its proteolytic processing. Proapolipoprotein C-II, the major form found in plasma undergoes proteolytic cleavage of its N-terminal hexapeptide to generate apolipoprotein C-II, which occurs as the minor form in plasma.

The protein resides in the secreted. Its function is as follows. Component of chylomicrons, very low-density lipoproteins (VLDL), low-density lipoproteins (LDL), and high-density lipoproteins (HDL) in plasma. Plays an important role in lipoprotein metabolism as an activator of lipoprotein lipase. Both proapolipoprotein C-II and apolipoprotein C-II can activate lipoprotein lipase. The protein is Apolipoprotein C-II (APOC2) of Macaca fascicularis (Crab-eating macaque).